We begin with the raw amino-acid sequence, 75 residues long: Small ribosomal subunit protein bS16 (75 aa).

It belongs to the bacterial ribosomal protein bS16 family.

The polypeptide is Small ribosomal subunit protein bS16 (Helicobacter pylori (strain G27)).